A 64-amino-acid chain; its full sequence is Large ribosomal subunit protein bL35 (64 aa).

Residues 22 to 44 form a disordered region; it reads IMKQQAGMRHNLEVKSSKRKARL.

The protein belongs to the bacterial ribosomal protein bL35 family.

The protein is Large ribosomal subunit protein bL35 of Clavibacter sepedonicus (Clavibacter michiganensis subsp. sepedonicus).